The following is a 466-amino-acid chain: MGQSSQPHELGGGLKSRHVTMLSIAGVIGASLFVGSSVAIAEAGPAVLLAYLFAGLLVVMIMRMLAEMAVATPDTGSFSTYADKAIGRWAGYTIGWLYWWFWVLVIPLEANIAAMILHSWVPGIPIWLFSLVITLALTGSNLLSVKNYGEFEFWLALCKVIAILAFIFLGAVAISGFYPYAEVSGISRLWDSGGFMPNGFGAVLSAMLITMFSFMGAEIVTIAAAESDTPEKHIVRATNSVIWRISIFYLCSIFVVVALIPWNMPGLKAVGSYRSVLELLNIPHAKLIMDCVILLSVTSCLNSALYTASRMLYSLSRRGDAPAVMGKINRSKTPYVAVLLSTGAAFLTVVVNYYAPAKVFKFLIDSSGAIALLVYLVIAVSQLRMRKILRAEGSEIRLRMWLYPWLTWLVIGFITFVLVVMLFRPAQQLEVISTGLLAIGIICTVPIMARWKKLVLWQKTPVHNTR.

At 2–20 (GQSSQPHELGGGLKSRHVT) the chain is on the cytoplasmic side. The next 2 helical transmembrane spans lie at 21-41 (MLSIAGVIGASLFVGSSVAIA) and 42-62 (EAGPAVLLAYLFAGLLVVMIM). Over 63–96 (RMLAEMAVATPDTGSFSTYADKAIGRWAGYTIGW) the chain is Cytoplasmic. The helical transmembrane segment at 97-117 (LYWWFWVLVIPLEANIAAMIL) threads the bilayer. His118 is a topological domain (periplasmic). A helical transmembrane segment spans residues 119–139 (SWVPGIPIWLFSLVITLALTG). Over 140 to 153 (SNLLSVKNYGEFEF) the chain is Cytoplasmic. A helical transmembrane segment spans residues 154–174 (WLALCKVIAILAFIFLGAVAI). The Periplasmic portion of the chain corresponds to 175–199 (SGFYPYAEVSGISRLWDSGGFMPNG). The chain crosses the membrane as a helical span at residues 200-220 (FGAVLSAMLITMFSFMGAEIV). Residues 221-246 (TIAAAESDTPEKHIVRATNSVIWRIS) lie on the Cytoplasmic side of the membrane. The helical transmembrane segment at 247–267 (IFYLCSIFVVVALIPWNMPGL) threads the bilayer. Topologically, residues 268–286 (KAVGSYRSVLELLNIPHAK) are periplasmic. Residues 287–307 (LIMDCVILLSVTSCLNSALYT) form a helical membrane-spanning segment. Residues 308-334 (ASRMLYSLSRRGDAPAVMGKINRSKTP) are Cytoplasmic-facing. The helical transmembrane segment at 335 to 355 (YVAVLLSTGAAFLTVVVNYYA) threads the bilayer. Topologically, residues 356 to 358 (PAK) are periplasmic. The chain crosses the membrane as a helical span at residues 359-379 (VFKFLIDSSGAIALLVYLVIA). Over 380-402 (VSQLRMRKILRAEGSEIRLRMWL) the chain is Cytoplasmic. The chain crosses the membrane as a helical span at residues 403 to 423 (YPWLTWLVIGFITFVLVVMLF). The Periplasmic portion of the chain corresponds to 424–428 (RPAQQ). A helical transmembrane segment spans residues 429–449 (LEVISTGLLAIGIICTVPIMA). Over 450 to 466 (RWKKLVLWQKTPVHNTR) the chain is Cytoplasmic.

Belongs to the amino acid-polyamine-organocation (APC) superfamily. Amino acid transporter (AAT) (TC 2.A.3.1) family. In terms of assembly, monomer.

Its subcellular location is the cell inner membrane. The enzyme catalyses 4-aminobutanoate(in) + H(+)(in) = 4-aminobutanoate(out) + H(+)(out). It functions in the pathway amino-acid degradation; 4-aminobutanoate degradation. Its activity is regulated as follows. Uptake is stimulated by ammonium sulfate and abolished by 2,4-dinitrophenol. Is affected both topologically and kinetically by phospholipid composition of the membrane. In cells lacking phosphatidylethanolamine (PE), the N-terminal hairpin is inverted relative to the membrane and the rate of GABA transport is reduced by more than 99%. Functionally, transporter for gamma-aminobutyrate (GABA). Transport is driven by the membrane potential. Can also transport a number of GABA analogs such as nipecotic acid or muscimol. The polypeptide is Gamma-aminobutyric acid permease (Escherichia coli (strain K12)).